The following is a 402-amino-acid chain: Major outer membrane porin (402 aa).

Positions 1–22 are cleaved as a signal peptide; the sequence is MKKLLKSALLFAATGSALSLQA.

The protein belongs to the chlamydial porin (CP) (TC 1.B.2) family. Part of a disulfide cross-linked outer membrane complex (COMC) composed of the major outer membrane porin (MOMP), the small cysteine-rich protein (OmcA) and the large cysteine-rich periplasmic protein (OmcB).

The protein localises to the cell outer membrane. Functionally, in elementary bodies (EBs, the infectious stage, which is able to survive outside the host cell) provides the structural integrity of the outer envelope through disulfide cross-links with the small cysteine-rich protein and the large cysteine-rich periplasmic protein. It has been described in publications as the Sarkosyl-insoluble COMC (Chlamydia outer membrane complex), and serves as the functional equivalent of peptidoglycan. It is present but some of the disulfide bonds are reduced in reticulate bodies (RBs). Its function is as follows. Permits diffusion of specific solutes through the outer membrane. This chain is Major outer membrane porin (ompA), found in Chlamydophila psittaci (strain ATCC VR-125 / 6BC) (Chlamydia psittaci).